Consider the following 430-residue polypeptide: Asparagine--tRNA ligase (430 aa).

The protein belongs to the class-II aminoacyl-tRNA synthetase family. As to quaternary structure, homodimer.

The protein resides in the cytoplasm. It catalyses the reaction tRNA(Asn) + L-asparagine + ATP = L-asparaginyl-tRNA(Asn) + AMP + diphosphate + H(+). This Geobacillus thermodenitrificans (strain NG80-2) protein is Asparagine--tRNA ligase.